A 299-amino-acid polypeptide reads, in one-letter code: MLFDQIASNKRKTWILLLVFFLLLALVGYAVGYLFIRSGLGGLVIALIIGFIYALSMIFQSTEIVMSMNGAREVDEQTAPDLYHVVEDMALVAQIPMPRIFIIDDPALNAFATGSNPQNAAVAATSGLLAIMNREELEAVMGHEVSHIRNYDIRISTIAVALASAITMLSSMAGRMMWWGGAGRRRSDDDRDGNGLEIIMLVVSLLAIVLAPLAATLVQLAISRQREFLADASSVELTRNPQGMINALDKLDNSKPMSRHVDDASSALYINDPKKGGGFQKLFYTHPPISERIERLKQM.

Helical transmembrane passes span 15–35 (ILLL…GYLF) and 39–59 (GLGG…SMIF). Histidine 143 lines the Zn(2+) pocket. Residue glutamate 144 is part of the active site. Residue histidine 147 participates in Zn(2+) binding. The next 2 membrane-spanning stretches (helical) occupy residues 158–178 (IAVA…RMMW) and 198–218 (IIML…ATLV). Zn(2+) is bound at residue glutamate 227.

Belongs to the peptidase M48B family. Requires Zn(2+) as cofactor.

Its subcellular location is the cell membrane. The polypeptide is Protease HtpX homolog (Streptococcus pneumoniae (strain Taiwan19F-14)).